The following is a 277-amino-acid chain: 3-methyl-2-oxobutanoate hydroxymethyltransferase (277 aa).

Residues Asp-43 and Asp-82 each coordinate Mg(2+). Residues 43–44, Asp-82, and Lys-112 contribute to the 3-methyl-2-oxobutanoate site; that span reads DS. A Mg(2+)-binding site is contributed by Glu-114. Catalysis depends on Glu-181, which acts as the Proton acceptor.

This sequence belongs to the PanB family. Homodecamer; pentamer of dimers. The cofactor is Mg(2+).

The protein localises to the cytoplasm. The catalysed reaction is 3-methyl-2-oxobutanoate + (6R)-5,10-methylene-5,6,7,8-tetrahydrofolate + H2O = 2-dehydropantoate + (6S)-5,6,7,8-tetrahydrofolate. Its pathway is cofactor biosynthesis; (R)-pantothenate biosynthesis; (R)-pantoate from 3-methyl-2-oxobutanoate: step 1/2. In terms of biological role, catalyzes the reversible reaction in which hydroxymethyl group from 5,10-methylenetetrahydrofolate is transferred onto alpha-ketoisovalerate to form ketopantoate. The protein is 3-methyl-2-oxobutanoate hydroxymethyltransferase of Listeria monocytogenes serotype 4b (strain CLIP80459).